A 292-amino-acid polypeptide reads, in one-letter code: Ribosomal RNA small subunit methyltransferase A (292 aa).

Residues Asn-28, Leu-30, Gly-55, Glu-76, Asp-101, and Asn-126 each coordinate S-adenosyl-L-methionine.

This sequence belongs to the class I-like SAM-binding methyltransferase superfamily. rRNA adenine N(6)-methyltransferase family. RsmA subfamily.

The protein localises to the cytoplasm. It carries out the reaction adenosine(1518)/adenosine(1519) in 16S rRNA + 4 S-adenosyl-L-methionine = N(6)-dimethyladenosine(1518)/N(6)-dimethyladenosine(1519) in 16S rRNA + 4 S-adenosyl-L-homocysteine + 4 H(+). In terms of biological role, specifically dimethylates two adjacent adenosines (A1518 and A1519) in the loop of a conserved hairpin near the 3'-end of 16S rRNA in the 30S particle. May play a critical role in biogenesis of 30S subunits. The chain is Ribosomal RNA small subunit methyltransferase A from Bacillus anthracis.